We begin with the raw amino-acid sequence, 525 residues long: Protein shisa-6 (525 aa).

A signal peptide spans 1-30 (MALRRLLLPPLLLSLLLSLASLHLPPGADA). Over 31–180 (ARGRSGNRTL…NKYDPEKDKT (150 aa)) the chain is Extracellular. Residues Asn37 and Asn62 are each glycosylated (N-linked (GlcNAc...) asparagine). Residues 181–201 (NFTVYITCGVIAFVIVAGVFA) traverse the membrane as a helical segment. The Cytoplasmic portion of the chain corresponds to 202–525 (KVSYDKAHRP…YTASKTEVTV (324 aa)). The tract at residues 241–294 (ISAIDTSPKENTPVRSTSKNHYTPVRTAKQTPGDRQYNHPILSSATQTPTHEKP) is disordered. The segment covering 243–261 (AIDTSPKENTPVRSTSKNH) has biased composition (polar residues). A phosphoserine mark is found at Ser416, Ser422, and Ser434. A Phosphothreonine modification is found at Thr458. The disordered stretch occupies residues 469–495 (MHSHPSASNNSYATLGQSQTAAKRHAF). The span at 473-489 (PSASNNSYATLGQSQTA) shows a compositional bias: polar residues. Thr502 carries the phosphothreonine modification. A PDZ-binding motif is present at residues 522 to 525 (EVTV).

Belongs to the shisa family. In terms of assembly, component of the postsynaptic hippocampal AMPA-type glutamate receptor (AMPAR) complex, at least composed of pore forming AMPAR subunits GRIA1, GRIA2 and GRIA3 and AMPAR auxiliary proteins SHISA6 and SHISA7. Interacts (via PDZ-binding motif) with DLG4/PSD-95 (via PDZ domain); the interaction is direct. In terms of processing, N-glycosylated. Highly expressed in cerebellum and hippocampal neurons: CA1 stratum oriens and stratum radiatum, CA3 stratum oriens and stratum lucidum, and the dentate gyrus polymorphic layer. Expressed in other brain structures including olfactory bulb, cortex, amygdala and midbrain (at protein level). Also expressed in a subset of spermatogonial stem cells. Also expressed in eye, heart, kidney, lung, muscle and spleen. Isoform 2: Specifically expressed in hippocampus.

The protein localises to the postsynaptic density membrane. Functionally, involved in maintenance of high-frequency synaptic transmission at hippocampal CA3-CA1 synapses. Regulates AMPA-type glutamate receptor (AMPAR) immobilization at postsynaptic density keeping the channels in an activated state in the presence of glutamate and preventing synaptic depression. May play a role in self-renewal and differentiation of spermatogonial stem cells by inhibiting canonical Wnt signaling pathway. This chain is Protein shisa-6, found in Mus musculus (Mouse).